A 341-amino-acid polypeptide reads, in one-letter code: Putative gustatory receptor 9a (341 aa).

Residue methionine 1 is a topological domain, cytoplasmic. Residues 2–22 (SLWLEHFLTGYFQLCGLVCGW) traverse the membrane as a helical segment. Residues 23-30 (SGSRLGRL) are Extracellular-facing. A helical transmembrane segment spans residues 31–51 (LSSTFLVLILIELVGEIETYF). At 52–68 (TEENPDNESVPAYFAKV) the chain is on the cytoplasmic side. A helical membrane pass occupies residues 69 to 89 (IMGVNMAYKMIHAWIALSALF). Topologically, residues 90-113 (ECRRFRYLLEELPPVKATSFIYRH) are extracellular. A helical transmembrane segment spans residues 114–134 (LILEIILFACNAFLVLSEYTI). Topologically, residues 135-202 (RGIYLENLRY…LAKVTRSLSH (68 aa)) are cytoplasmic. Residues 203-223 (LFGLSLLLLNVLCLGDWIIVC) form a helical membrane-spanning segment. Over 224–233 (NVYFMVAYLQ) the chain is Extracellular. Residues 234-254 (VLPATLFLFGQVMFVVCPTLI) form a helical membrane-spanning segment. At 255 to 318 (KIWSICAASH…GIYHLNLQTL (64 aa)) the chain is on the cytoplasmic side. Residues 319 to 339 (AGMFFFILEALVIFLQFVSLV) traverse the membrane as a helical segment. At 340-341 (RT) the chain is on the extracellular side.

This sequence belongs to the insect chemoreceptor superfamily. Gustatory receptor (GR) family. Gr2a subfamily. As to expression, expressed in neurons of the terminal external chemosensory organ of larvae.

Its subcellular location is the cell membrane. Its function is as follows. Probable gustatory receptor which mediates acceptance or avoidance behavior, depending on its substrates. The protein is Putative gustatory receptor 9a (Gr9a) of Drosophila melanogaster (Fruit fly).